The sequence spans 94 residues: MDLRVIENLETELAIEIEGEDHTFMNVLKGALLELDGVTAATYDVNPEQSGGQTEPIVTIKTDGSIDPLDALEQGASRVRDKTDAFEEAFEAAA.

This sequence belongs to the archaeal Rpo11/eukaryotic RPB11/RPC19 RNA polymerase subunit family. Part of the RNA polymerase complex.

It localises to the cytoplasm. The catalysed reaction is RNA(n) + a ribonucleoside 5'-triphosphate = RNA(n+1) + diphosphate. Its function is as follows. DNA-dependent RNA polymerase (RNAP) catalyzes the transcription of DNA into RNA using the four ribonucleoside triphosphates as substrates. This chain is DNA-directed RNA polymerase subunit Rpo11, found in Natronomonas pharaonis (strain ATCC 35678 / DSM 2160 / CIP 103997 / JCM 8858 / NBRC 14720 / NCIMB 2260 / Gabara) (Halobacterium pharaonis).